Here is a 330-residue protein sequence, read N- to C-terminus: MKYTFNEEKEFDIVAIGRACIDLNAAEYNRPMEETMTFSKYVGGSPANIAIGSAKLGLKAGFIGKIPDDQHGRFIVSYMQGKGVDTSQMTVDREGRKAGLAFTEILSPEECSILMYRDDVADLYLEPSEVNEGYIANAKMLLVSGTALAKSPSREAVLKAVHIAKKHDVKVVFELDYRPYTWQSAEETAVYYTLVAEQSDIVIGTRDEFDVMENRSGGGNDETVRHLFAHSADLVVIKHGVDGSYAYSRSGEVFRAHAYKTKVLKTFGAGDSYASAFIYGLVSGRDIETALKYGSASASIVVSKHSSSEAMPAAGEIIELIEAQHSLNGK.

The protein belongs to the carbohydrate kinase PfkB family.

The enzyme catalyses 5-dehydro-2-deoxy-D-gluconate + ATP = 6-phospho-5-dehydro-2-deoxy-D-gluconate + ADP + H(+). It participates in polyol metabolism; myo-inositol degradation into acetyl-CoA; acetyl-CoA from myo-inositol: step 5/7. Catalyzes the phosphorylation of 5-dehydro-2-deoxy-D-gluconate (2-deoxy-5-keto-D-gluconate or DKG) to 6-phospho-5-dehydro-2-deoxy-D-gluconate (DKGP). The sequence is that of 5-dehydro-2-deoxygluconokinase from Bacillus velezensis (strain DSM 23117 / BGSC 10A6 / LMG 26770 / FZB42) (Bacillus amyloliquefaciens subsp. plantarum).